We begin with the raw amino-acid sequence, 115 residues long: UPF0125 protein VP0646 (115 aa).

Residues 92 to 115 (RAEQAKAAGNADPVTGGKPNALRK) are disordered.

Belongs to the UPF0125 (RnfH) family.

In Vibrio parahaemolyticus serotype O3:K6 (strain RIMD 2210633), this protein is UPF0125 protein VP0646.